Consider the following 159-residue polypeptide: MAKTPKKDKTEEKEEHEESGGNKEDRERAYEVLATRVNPIASPLAARKLTKRLYKTVKKASKEKNIRKGIRDVQKFIKKGERGIVLIAGDTTPIEVYCHLPVVCEDAKIPYCYVPAKQDLGEAAGSKRPTCCVLLKPNESYQSSYDECLTDVTTLPRPI.

The interval 1-28 is disordered; that stretch reads MAKTPKKDKTEEKEEHEESGGNKEDRER.

The protein belongs to the eukaryotic ribosomal protein eL8 family. Component of the small nucleolar ribonucleoprotein particle containing H/ACA-type snoRNAs (H/ACA snoRNPs). Component of the telomerase holoenzyme complex.

It localises to the nucleus. It is found in the nucleolus. Functionally, required for ribosome biogenesis. Part of a complex which catalyzes pseudouridylation of rRNA. This involves the isomerization of uridine such that the ribose is subsequently attached to C5, instead of the normal N1. Pseudouridine ('psi') residues may serve to stabilize the conformation of rRNAs. In Branchiostoma belcheri (Amphioxus), this protein is H/ACA ribonucleoprotein complex subunit 2-like protein.